The primary structure comprises 379 residues: Wnt inhibitory factor 1 (379 aa).

A signal peptide spans 1-28; that stretch reads MARRSAFPAAALWLWSILLCLLALRAEA. In terms of domain architecture, WIF spans 38–177; sequence LWIDAHQARV…PQNAIFFKTC (140 aa). N-linked (GlcNAc...) asparagine glycosylation is present at Asn88. 7 disulfides stabilise this stretch: Cys140/Cys177, Cys182/Cys192, Cys186/Cys198, Cys200/Cys209, Cys214/Cys224, Cys218/Cys230, and Cys232/Cys241. 5 consecutive EGF-like domains span residues 178-210, 211-242, 243-271, 274-306, and 307-338; these read QQAECPGGCRNGGFCNERRICECPDGFHGPHCE, KALCTPRCMNGGLCVTPGFCICPPGFYGVNCD, KANCSTTCFNGGTCFYPGKCICPPGLEGE, EISKCPQPCRNGGKCIGKSKCKCSKGYQGDLCS, and KPVCEPGCGAHGTCHEPNKCQCQEGWHGRHCN. Asn245 carries an N-linked (GlcNAc...) asparagine glycan. 8 disulfide bridges follow: Cys246/Cys256, Cys250/Cys262, Cys278/Cys288, Cys282/Cys294, Cys296/Cys305, Cys310/Cys320, Cys314/Cys326, and Cys328/Cys337. The disordered stretch occupies residues 354-379; it reads AQLRQHTPSLKKAEERRDPPESNYIW. Basic and acidic residues predominate over residues 364–373; that stretch reads KKAEERRDPP.

Interacts with MYOC.

It localises to the secreted. Its function is as follows. Binds to WNT proteins and inhibits their activities. May be involved in mesoderm segmentation. This is Wnt inhibitory factor 1 (WIF1) from Homo sapiens (Human).